Here is a 276-residue protein sequence, read N- to C-terminus: Rhomboid protease GlpG (276 aa).

A run of 6 helical transmembrane segments spans residues 94 to 114 (GPVT…MQIL), 142 to 162 (ALMH…WYLG), 169 to 189 (LGSG…GYVQ), 192 to 212 (FSGP…GYVW), 229 to 249 (LIIF…GMSM), and 250 to 270 (ANGA…VDSL). Catalysis depends on S201, which acts as the Nucleophile. Residue H254 is part of the active site.

Belongs to the peptidase S54 family.

The protein localises to the cell inner membrane. It catalyses the reaction Cleaves type-1 transmembrane domains using a catalytic dyad composed of serine and histidine that are contributed by different transmembrane domains.. In terms of biological role, rhomboid-type serine protease that catalyzes intramembrane proteolysis. This is Rhomboid protease GlpG from Escherichia coli O45:K1 (strain S88 / ExPEC).